Consider the following 965-residue polypeptide: Villin-3 (965 aa).

6 Gelsolin-like repeats span residues Glu-27–Gly-79, Val-150–Ala-190, Gly-262–Lys-304, Ala-401–Glu-452, Asn-533–Glu-573, and Phe-635–Gln-676. 2 stretches are compositionally biased toward low complexity: residues Ala-769–Pro-780 and Ser-808–Arg-828. 2 disordered regions span residues Ala-769–Arg-828 and Thr-840–Phe-906. Residues Glu-865 to Val-879 show a composition bias toward acidic residues. Ser-880 carries the post-translational modification Phosphoserine. Residues Glu-900 to Phe-965 enclose the HP domain.

The protein belongs to the villin/gelsolin family. As to expression, expressed in all tissues examined, including root hairs.

The protein localises to the cytoplasm. Its subcellular location is the cytoskeleton. Binds actin and actin filament bundles in a Ca(2+)-insensitive manner, but severs actin filaments in a calcium-dependent manner, regardless of the presence or not of VLN1 (AC O81643). Acts redundantly with VLN2 (AC O81644) to generate thick actin filament bundles, to regulate directional organ growth and in sclerenchyma development. In Arabidopsis thaliana (Mouse-ear cress), this protein is Villin-3.